The sequence spans 147 residues: Large ribosomal subunit protein uL15 (147 aa).

Positions 1–46 (MSIRLENLSYTPGARKEKHRKGRGHAAGKGKQAGRGQSGQKKRSTV) are disordered. The span at 16–28 (KEKHRKGRGHAAG) shows a compositional bias: basic residues.

This sequence belongs to the universal ribosomal protein uL15 family. As to quaternary structure, part of the 50S ribosomal subunit.

In terms of biological role, binds to the 23S rRNA. In Mesomycoplasma hyopneumoniae (strain J / ATCC 25934 / NCTC 10110) (Mycoplasma hyopneumoniae), this protein is Large ribosomal subunit protein uL15.